The primary structure comprises 133 residues: ATP synthase epsilon chain, chloroplastic (133 aa).

Belongs to the ATPase epsilon chain family. F-type ATPases have 2 components, CF(1) - the catalytic core - and CF(0) - the membrane proton channel. CF(1) has five subunits: alpha(3), beta(3), gamma(1), delta(1), epsilon(1). CF(0) has three main subunits: a, b and c.

The protein localises to the plastid. It is found in the chloroplast thylakoid membrane. Functionally, produces ATP from ADP in the presence of a proton gradient across the membrane. The protein is ATP synthase epsilon chain, chloroplastic of Nephroselmis olivacea (Green alga).